A 332-amino-acid polypeptide reads, in one-letter code: MKPSDARHIPVLGPEAVGLLAPRAGGIYVDGTFGAGGYTRLILETAGSRVIAIDRDPSAIAGGADLVTEAGGRLTLVQDRFSNLADVCAAQGAATVDGVVMDIGVSSMQLDQAERGFSFRFDGPLDMRMGRDGPSAADVVARASETDLANIIYIFGEERYSRHVARAIVAARSETPITTTKALADIVAKVVRAKPGEIHPATRTFQGLRIFVNEELDELHQALDAAERVLKPSGRLAVVSFHSLEDRIVKTFLAERSKTGGGSRHLPEVAQAAPSFTLLSKRPIVAGDAEVAANPRARSAKLRGAERTESPAHAAGDLPGWPTLASVMRAGR.

S-adenosyl-L-methionine-binding positions include 36-38 (GGY), Asp54, Phe81, Asp102, and Gln109. Residues 295–322 (PRARSAKLRGAERTESPAHAAGDLPGWP) are disordered.

It belongs to the methyltransferase superfamily. RsmH family.

It localises to the cytoplasm. The catalysed reaction is cytidine(1402) in 16S rRNA + S-adenosyl-L-methionine = N(4)-methylcytidine(1402) in 16S rRNA + S-adenosyl-L-homocysteine + H(+). Functionally, specifically methylates the N4 position of cytidine in position 1402 (C1402) of 16S rRNA. The polypeptide is Ribosomal RNA small subunit methyltransferase H (Rhodopseudomonas palustris (strain ATCC BAA-98 / CGA009)).